A 431-amino-acid polypeptide reads, in one-letter code: Putative serine/threonine-protein kinase B (431 aa).

The region spanning 20 to 279 (YLNKGIVGLG…VRENFQIPYI (260 aa)) is the Protein kinase domain. ATP contacts are provided by residues 26–34 (VGLGSYGEG) and Lys49. Catalysis depends on Asp147, which acts as the Proton acceptor. A PH domain is found at 331 to 429 (DVTHRGHVNK…WVHAIQRGIG (99 aa)).

This sequence belongs to the protein kinase superfamily. Ser/Thr protein kinase family.

The catalysed reaction is L-seryl-[protein] + ATP = O-phospho-L-seryl-[protein] + ADP + H(+). The enzyme catalyses L-threonyl-[protein] + ATP = O-phospho-L-threonyl-[protein] + ADP + H(+). This chain is Putative serine/threonine-protein kinase B (NRKB), found in Trypanosoma brucei brucei.